A 702-amino-acid chain; its full sequence is Elongation factor G 2 (702 aa).

A tr-type G domain is found at 8–285; the sequence is DMVRNIGISA…AVTYYLPSPA (278 aa). GTP-binding positions include 17-24, 84-88, and 138-141; these read AHIDSGKT, DTPGH, and NKLD.

Belongs to the TRAFAC class translation factor GTPase superfamily. Classic translation factor GTPase family. EF-G/EF-2 subfamily.

Its subcellular location is the cytoplasm. Functionally, catalyzes the GTP-dependent ribosomal translocation step during translation elongation. During this step, the ribosome changes from the pre-translocational (PRE) to the post-translocational (POST) state as the newly formed A-site-bound peptidyl-tRNA and P-site-bound deacylated tRNA move to the P and E sites, respectively. Catalyzes the coordinated movement of the two tRNA molecules, the mRNA and conformational changes in the ribosome. The sequence is that of Elongation factor G 2 from Bdellovibrio bacteriovorus (strain ATCC 15356 / DSM 50701 / NCIMB 9529 / HD100).